Reading from the N-terminus, the 353-residue chain is MEDCIKRNQTKKIKVGDIFIGGDSPISVQSMTNTDTRDVKATIHQIKSLEEAGCDIVRLAILDNEAATAIGEIKKHVKIPLVADIHYDYRLAVECMKNGVDKIRLNPGNIGGNDRVRTVAGMAKERGIPIRIGVNSGSVEKRILEKFGGVTAEGMVESALAHVAMLENVDFNDIAISIKASSVPMTIAAYRLLSEKCLYPLHVGVTEAGTVYKGTIKSAVGIGCLLAEGIGDTIRVSLTGDPVEEIKVGKQILKSLDLLKEGIEIVSCPTCGRTQVNLIDIANSIEPLLEKLNKNIKVAIMGCAVNGPGEAKDADIGIAGGVNEVLLFKKGRIIRKIPQENVVEELIKEISEM.

[4Fe-4S] cluster contacts are provided by Cys268, Cys271, Cys303, and Glu310.

This sequence belongs to the IspG family. The cofactor is [4Fe-4S] cluster.

It catalyses the reaction (2E)-4-hydroxy-3-methylbut-2-enyl diphosphate + oxidized [flavodoxin] + H2O + 2 H(+) = 2-C-methyl-D-erythritol 2,4-cyclic diphosphate + reduced [flavodoxin]. Its pathway is isoprenoid biosynthesis; isopentenyl diphosphate biosynthesis via DXP pathway; isopentenyl diphosphate from 1-deoxy-D-xylulose 5-phosphate: step 5/6. Converts 2C-methyl-D-erythritol 2,4-cyclodiphosphate (ME-2,4cPP) into 1-hydroxy-2-methyl-2-(E)-butenyl 4-diphosphate. This is 4-hydroxy-3-methylbut-2-en-1-yl diphosphate synthase (flavodoxin) from Ruminiclostridium cellulolyticum (strain ATCC 35319 / DSM 5812 / JCM 6584 / H10) (Clostridium cellulolyticum).